The chain runs to 277 residues: Large ribosomal subunit protein uL2 (277 aa).

A disordered region spans residues 222–277 (GVAMNPVDHPHGGGEGRTSGGRHPVSPWGKPTKGKRTRSNKATDKFIMRSRHQRKK).

It belongs to the universal ribosomal protein uL2 family. As to quaternary structure, part of the 50S ribosomal subunit. Forms a bridge to the 30S subunit in the 70S ribosome.

Functionally, one of the primary rRNA binding proteins. Required for association of the 30S and 50S subunits to form the 70S ribosome, for tRNA binding and peptide bond formation. It has been suggested to have peptidyltransferase activity; this is somewhat controversial. Makes several contacts with the 16S rRNA in the 70S ribosome. The polypeptide is Large ribosomal subunit protein uL2 (Bartonella bacilliformis (strain ATCC 35685 / KC583 / Herrer 020/F12,63)).